Here is a 335-residue protein sequence, read N- to C-terminus: Epidermal differentiation-specific protein (335 aa).

Beta/gamma crystallin 'Greek key' domains follow at residues 2–42 (NTIT…KIVG), 43–81 (QPWILHQDINYSGQCLPLEEGEYSGISMNDGASSLRLIT), 87–126 (PQITVYEHVNGGGKALVLTEETNLAFGNMHDNISSHRVQR), and 127–169 (GAWA…YPLR).

It belongs to the beta/gamma-crystallin family. Epidermis specific.

The polypeptide is Epidermal differentiation-specific protein (Cynops pyrrhogaster (Japanese fire-bellied newt)).